Consider the following 453-residue polypeptide: tRNA modification GTPase MnmE (453 aa).

Residues Arg-22, Glu-79, and Lys-119 each coordinate (6S)-5-formyl-5,6,7,8-tetrahydrofolate. The region spanning 215 to 376 (GMKVVIAGRP…LKLHLKSLMG (162 aa)) is the TrmE-type G domain. K(+) is bound at residue Asn-225. GTP is bound by residues 225 to 230 (NAGKSS), 244 to 250 (TEIAGTT), 269 to 272 (DTAG), and 334 to 337 (NKAD). Ser-229 serves as a coordination point for Mg(2+). 3 residues coordinate K(+): Thr-244, Ile-246, and Thr-249. Thr-250 lines the Mg(2+) pocket. Residue Lys-453 coordinates (6S)-5-formyl-5,6,7,8-tetrahydrofolate.

The protein belongs to the TRAFAC class TrmE-Era-EngA-EngB-Septin-like GTPase superfamily. TrmE GTPase family. In terms of assembly, homodimer. Heterotetramer of two MnmE and two MnmG subunits. K(+) serves as cofactor.

The protein localises to the cytoplasm. Functionally, exhibits a very high intrinsic GTPase hydrolysis rate. Involved in the addition of a carboxymethylaminomethyl (cmnm) group at the wobble position (U34) of certain tRNAs, forming tRNA-cmnm(5)s(2)U34. The sequence is that of tRNA modification GTPase MnmE from Shewanella putrefaciens (strain CN-32 / ATCC BAA-453).